Consider the following 178-residue polypeptide: C-phycoerythrin class 2 subunit beta (178 aa).

Phycourobilin is bound by residues Cys50 and Cys61. The (2R,3E)-phycoerythrobilin site is built by Cys82 and Cys159.

The protein belongs to the phycobiliprotein family. In terms of assembly, heterodimer of an alpha and a beta chain. In terms of processing, contains two covalently linked phycoerythrobilin chromophores and one covalently linked phycourobilin chromophore.

The protein localises to the cellular thylakoid membrane. Its function is as follows. Light-harvesting photosynthetic bile pigment-protein from the phycobiliprotein complex. This is C-phycoerythrin class 2 subunit beta (mpeB) from Synechococcus sp. (strain WH8103).